Consider the following 239-residue polypeptide: Fatty acid metabolism regulator protein (239 aa).

The region spanning 6–74 (QSPAGFAEEY…HGKPTKVNNF (69 aa)) is the HTH gntR-type domain. Residues 34 to 53 (ERELSELIGVTRTTLREVLQ) constitute a DNA-binding region (H-T-H motif).

Homodimer.

The protein localises to the cytoplasm. In terms of biological role, multifunctional regulator of fatty acid metabolism. The polypeptide is Fatty acid metabolism regulator protein (Proteus mirabilis (strain HI4320)).